Here is a 307-residue protein sequence, read N- to C-terminus: Ribosomal RNA small subunit methyltransferase H (307 aa).

Residues Gly33 to Tyr35, Asp51, Phe82, Asp96, and Gln103 contribute to the S-adenosyl-L-methionine site.

Belongs to the methyltransferase superfamily. RsmH family.

It is found in the cytoplasm. The enzyme catalyses cytidine(1402) in 16S rRNA + S-adenosyl-L-methionine = N(4)-methylcytidine(1402) in 16S rRNA + S-adenosyl-L-homocysteine + H(+). Its function is as follows. Specifically methylates the N4 position of cytidine in position 1402 (C1402) of 16S rRNA. The protein is Ribosomal RNA small subunit methyltransferase H of Rickettsia peacockii (strain Rustic).